The chain runs to 182 residues: Photosystem I assembly protein Ycf4 (182 aa).

Transmembrane regions (helical) follow at residues 22 to 42 (WAII…SSYL) and 66 to 86 (FYGI…LFSV).

The protein belongs to the Ycf4 family.

It is found in the plastid. It localises to the chloroplast thylakoid membrane. Functionally, seems to be required for the assembly of the photosystem I complex. In Tupiella akineta (Green alga), this protein is Photosystem I assembly protein Ycf4.